A 409-amino-acid chain; its full sequence is MIEVLLVTICLAAFPYQGSSIILESGNVNDYEVVYPRKVTALPKGAVQPKYEDAMQYELKVNGEPVVLHLEKNKGLFSKDYSETHYSPDGREITTYPPVEDHCYYHGRIENDADSTASISACNGLKGHFKLQGETYLIEPLKLSDSEAHAVFKFENVEKEDEAPKMCGVTQNWESYEPIKKASQSNLTPEHQRYIELFIVVDHGMFMKYNGNSDKIRRRIHQMVNIMKEAYRYLYIDIALTGVEIWSNKDMINVQPAAPQTLDSFGEWRKTDLLNRKSHDNAQLLTNTDFDGPTIGLAYVGTMCDPKLSTGVIQDHSPINLLVAVTMAHELGHNLGISHDTDSCSCGGYSCIMAPEISHEPSKYFSDCSYIQCWDFIMKENPQCILNKRLRTDTVSTPVSGNELLEAGE.

Residues 1–20 form the signal peptide; it reads MIEVLLVTICLAAFPYQGSS. A propeptide spanning residues 21–189 is cleaved from the precursor; that stretch reads IILESGNVND…KKASQSNLTP (169 aa). Positions 193–389 constitute a Peptidase M12B domain; that stretch reads RYIELFIVVD…ENPQCILNKR (197 aa). Ca(2+)-binding residues include Glu196 and Asp280. Intrachain disulfides connect Cys304–Cys384, Cys344–Cys368, and Cys346–Cys351. Position 329 (His329) interacts with Zn(2+). Glu330 is a catalytic residue. 2 residues coordinate Zn(2+): His333 and His339. Residues Cys384, Asn387, Val399, Asn402, Leu404, Glu406, and Glu409 each contribute to the Ca(2+) site. Residues 390 to 409 constitute a propeptide that is removed on maturation; sequence LRTDTVSTPVSGNELLEAGE.

This sequence belongs to the venom metalloproteinase (M12B) family. P-I subfamily. Monomer. Requires Zn(2+) as cofactor. Expressed by the venom gland.

Its subcellular location is the secreted. In terms of biological role, snake venom metalloproteinase that impairs hemostasis in the envenomed animal. The polypeptide is Snake venom metalloproteinase BITM02A (Bothrops insularis (Golden lancehead)).